A 668-amino-acid polypeptide reads, in one-letter code: NADH-ubiquinone oxidoreductase chain 5 (668 aa).

18 consecutive transmembrane segments (helical) span residues 1–21, 31–51, 81–101, 111–131, 133–153, 178–198, 211–231, 251–271, 283–303, 311–331, 339–359, 375–395, 421–441, 462–482, 519–539, 566–586, 629–649, and 650–668; these read MYII…LFGH, IAVG…YEIL, LTSI…LYSM, TRFF…VTAD, FVQL…LINF, LFFG…SVIF, LLGY…IGVV, TPVS…FLVL, ILNI…TIGI, VIAY…GLLN, LTTH…VIHG, LMPL…GFPF, AIIG…LLIL, TNMV…GYLT, LLPL…YFNL, FDFL…YDVM, IVQA…IGFL, and YVEL…PKIK.

This sequence belongs to the complex I subunit 5 family.

The protein resides in the mitochondrion inner membrane. The enzyme catalyses a ubiquinone + NADH + 5 H(+)(in) = a ubiquinol + NAD(+) + 4 H(+)(out). Its function is as follows. Core subunit of the mitochondrial membrane respiratory chain NADH dehydrogenase (Complex I) that is believed to belong to the minimal assembly required for catalysis. Complex I functions in the transfer of electrons from NADH to the respiratory chain. The immediate electron acceptor for the enzyme is believed to be ubiquinone. The protein is NADH-ubiquinone oxidoreductase chain 5 (nad5) of Dictyostelium citrinum (Slime mold).